The chain runs to 473 residues: TOX high mobility group box family member 2 (473 aa).

4 disordered regions span residues 1–42 (MSDG…SLLH), 139–211 (GLRS…VSAY), 277–302 (SKSPPDQGEAKNAQANPPAKMLPPKQ), and 340–473 (LLPG…PSAR). Residues 8–20 (LLSTSQTYNSQGE) show a composition bias toward polar residues. Positions 25-63 (YEIPPITPPNLPEPSLLHLGDHEAGYHSLCHGLAPNGLL) are required for transcriptional activation. Low complexity predominate over residues 153-164 (GSKSATPSPSSS). Basic and acidic residues predominate over residues 171 to 188 (DAHFKISGEKRPSTDPGK). The Nuclear localization signal signature appears at 172-201 (AHFKISGEKRPSTDPGKKAKNPKKKKKKDP). Residues 189 to 199 (KAKNPKKKKKK) are compositionally biased toward basic residues. Residues 204–272 (PQKPVSAYAL…EYLKALAAYR (69 aa)) constitute a DNA-binding region (HMG box). Low complexity-rich tracts occupy residues 373–382 (LLSPPLSMSP) and 415–440 (SDFPSGSGSRSPGPSNPSSSGDWDGS). Polar residues predominate over residues 463 to 473 (SPKNLQEPSAR).

In terms of tissue distribution, highly expressed in ovary, where it is restricted to undifferentiated granulosa cells. Expressed in hypothalamus, pituitary gland, testis and uterus.

The protein localises to the nucleus. Its function is as follows. Putative transcriptional activator involved in the hypothalamo-pituitary-gonadal system. This is TOX high mobility group box family member 2 (Tox2) from Rattus norvegicus (Rat).